Reading from the N-terminus, the 261-residue chain is UPF0246 protein PMI0005 (261 aa).

It belongs to the UPF0246 family.

The protein is UPF0246 protein PMI0005 of Proteus mirabilis (strain HI4320).